An 809-amino-acid polypeptide reads, in one-letter code: Protein TOC75, chloroplastic (809 aa).

Positions 1–17 (MRTSVIPNRLTPTLTTH) are enriched in polar residues. The N-terminal 35 residues, 1–35 (MRTSVIPNRLTPTLTTHPSRRRNDHITTRTSSLKC), are a transit peptide targeting the chloroplast. The segment at 1–44 (MRTSVIPNRLTPTLTTHPSRRRNDHITTRTSSLKCHLSPSSGDN) is disordered. The transit peptide at 36–131 (HLSPSSGDNN…RILSPARAIA (96 aa)) directs the protein to the chloroplast; outer membrane. Residues 132–143 (DEPKSEDWDSHE) lie on the Chloroplast intermembrane side of the membrane. Residues 144–152 (LPADITVLL) form a beta stranded membrane-spanning segment. Residues 153-160 (GRLSGFKK) are Cytoplasmic-facing. A beta stranded transmembrane segment spans residues 161–169 (YKISDILFF). Residues 170–225 (DRNKKSKVETQDSFLDMVSLKPGGVYTKAQLQKELESLATCGMFEKVDMEGKTNAD) are Chloroplast intermembrane-facing. Residues 226–234 (GSLGLTISF) traverse the membrane as a beta stranded segment. Over 235–247 (AESMWERADRFRC) the chain is Cytoplasmic. Residues 248–254 (INVGLMG) traverse the membrane as a beta stranded segment. The Chloroplast intermembrane segment spans residues 255–357 (QSKPVEMDPD…VVCEVVEGDI (103 aa)). A beta stranded membrane pass occupies residues 358 to 365 (TKLSIQYL). At 366-410 (DKLGNVVEGNTEGPVVQRELPKQLLPGHTFNIEAGKQALRNINSL) the chain is on the cytoplasmic side. Residues 411-418 (ALFSNIEV) traverse the membrane as a beta stranded segment. The Chloroplast intermembrane portion of the chain corresponds to 419–427 (NPRPDEMNE). The beta stranded transmembrane segment at 428-436 (GSIIVEIKL) threads the bilayer. The Cytoplasmic portion of the chain corresponds to 437–442 (KELEQK). Residues 443–452 (SAEVSTEWSI) traverse the membrane as a beta stranded segment. The Chloroplast intermembrane portion of the chain corresponds to 453–464 (VPGRGGRPTLAS). Residues 465-473 (LQPGGTITF) form a beta stranded membrane-spanning segment. The Cytoplasmic segment spans residues 474 to 500 (EHRNLQGLNRSLTGSVTTSNFLNPQDD). Residues 501–509 (LAFKMEYAH) traverse the membrane as a beta stranded segment. Residues 510 to 553 (PYLDGVDNPRNRTLRVSCFNSRKLSPVFTGGPGVDEVPSIWVDR) lie on the Chloroplast intermembrane side of the membrane. A beta stranded transmembrane segment spans residues 554–561 (AGVKANIT). The Cytoplasmic segment spans residues 562–569 (ENFSRQSK). A beta stranded membrane pass occupies residues 570-577 (FTYGLVME). Topologically, residues 578 to 684 (EIITRDESNH…VEEGAGKSPP (107 aa)) are chloroplast intermembrane. The beta stranded transmembrane segment at 685–693 (PVLVLHGHY) threads the bilayer. At 694-705 (GGCVGDLPSYDA) the chain is on the cytoplasmic side. The chain crosses the membrane as a beta stranded span at residues 706-714 (FTLGGPYSV). Residues 715-776 (RGYNMGEIGA…VYRRMGQGSS (62 aa)) lie on the Chloroplast intermembrane side of the membrane. Residues 777–783 (YGAGMKL) form a beta stranded membrane-spanning segment. Residues 784–797 (GLVRAEYAVDHNSG) lie on the Cytoplasmic side of the membrane. Residues 798-805 (TGAVFFRF) traverse the membrane as a beta stranded segment. At 806–809 (GERF) the chain is on the chloroplast intermembrane side.

Belongs to the TOC75 family. As to quaternary structure, part of the TOC core complex that includes a protein for the specific recognition of transit peptides surrounded by a ring composed of four proteins forming translocation channels, and four to five GTP-binding proteins providing energy. This core complex can interact with components of the TIC complex to form a larger import complex. Chloroplastic protein precursors such as prSS (precursor of the RuBisCO small subunit) also interact with these complexes. TOC75 interacts with OEP14, TOC34/OEP34, TOC86/OEP86, TIC55, TIC110/IEP110 and CLPC. In terms of tissue distribution, mostly expressed in young leaves, also present in old leaves, roots and stems (at protein level).

The protein localises to the plastid. Its subcellular location is the chloroplast outer membrane. In terms of biological role, mediates the insertion of proteins targeted to the outer membrane of chloroplasts. Required for the import of protein precursors into chloroplasts. Forms the voltage-dependent preprotein translocation channels (hydrophilic beta barrel) of the TOC complex in the chloroplastic outer membrane. The narrowest inner diameter of this channel is approximately 14 Angstroms. The sequence is that of Protein TOC75, chloroplastic (TOC75) from Pisum sativum (Garden pea).